The following is a 1063-amino-acid chain: MDAASGILPDYAELFCRSNFSFLHGASSAEELVERAAKQGYRGIAITDECSLAGAPRMHVAAKAVGLPLVVGAYFGVTPDDAAPGHDPGPGAFGLVLLAQNREGYGNLSELISWRRMNAPKGTYRLTPRMLAAPPRALAHLRGVPDCFAILVPTYPARADVLDAQLAWFDALFGERARLGLVQLQRALDGAHREQVRAAGERRGMHIVALGDVTMHIRSCKPLQDTMTAIRLGMPIAECGHALAPNGEQHLRTRQRIAQLFPADALAQTCRMLDACHFSLDDLRYEYPHEIVPAGHTPTSYLAQETWAGARRRYPDGVPDTVRQRIEFELALIADLKYEPYFLTVYDIVKYARSKDILCQGRGSAANSVVCYCLGVTEVNPQQSTLLFERFLSRERGEPPDIDVDFEHQRREEVIQYLYEKYGHDRAALAAAVSTYRPRGALRETGKALGVDPMLVERVAKEHRWFDGSRDLLARFASVGLDPEVPLIRTWAEIAARLLNFPRHLSQHSGGFVVSRGKLTRLVPVENAAMEGRRVIQWDKDDLEALGLMKVDVLALGMLSALHRAFDMITAWRGPPLPDGRPFRLEHIPQDDEATYDMICRADTVGVFQIESRAQMSMLPRLRPRGYYDLVVQVSIVRPGPIQGGAVHPYLERRRIAAGEAHGEITYPSEALERVLERTLGIPIFQEQVMQIAIVAAGFTPGEADALRRAMAAWKRKGDLGKYHERIVAGMLERGYSREFAEQIFEQIKGFGEYGFPESHAASFAKLAYASSWLKRHEPAIFLAALLNSQPMGFYPPAQLVQDAKRHGVTVLPIDATKSGWEASLEAQPGAAPPDGRPAVRLGLSLVRGLGEEAARRIGAARAAGPFASVDELARRACLERRDLEALAAANAFATLAGNRRDALWQAVAAAPIDEAVRPALGAPTEADDVFADYRTIGLTLNRHPVALLRPALDARRLSSAAALRDRRNGRLARACGLVTARQMPGTAKGVLFVTLEDETGCVNVIVRPELLERQRRETLDSQLLAVSGVWQCESDVRHLVAQYLEDLTPLIAGLRTESREFH.

This sequence belongs to the DNA polymerase type-C family. DnaE2 subfamily.

It is found in the cytoplasm. The catalysed reaction is DNA(n) + a 2'-deoxyribonucleoside 5'-triphosphate = DNA(n+1) + diphosphate. In terms of biological role, DNA polymerase involved in damage-induced mutagenesis and translesion synthesis (TLS). It is not the major replicative DNA polymerase. In Burkholderia mallei (strain ATCC 23344), this protein is Error-prone DNA polymerase.